The primary structure comprises 80 residues: Exodeoxyribonuclease 7 small subunit (80 aa).

The protein belongs to the XseB family. In terms of assembly, heterooligomer composed of large and small subunits.

The protein localises to the cytoplasm. It catalyses the reaction Exonucleolytic cleavage in either 5'- to 3'- or 3'- to 5'-direction to yield nucleoside 5'-phosphates.. In terms of biological role, bidirectionally degrades single-stranded DNA into large acid-insoluble oligonucleotides, which are then degraded further into small acid-soluble oligonucleotides. In Oleidesulfovibrio alaskensis (strain ATCC BAA-1058 / DSM 17464 / G20) (Desulfovibrio alaskensis), this protein is Exodeoxyribonuclease 7 small subunit.